The chain runs to 693 residues: C6 finger domain transcription factor nscR (693 aa).

Residues 17–43 constitute a DNA-binding region (zn(2)-C6 fungal-type); the sequence is CELCRERKVKCDKLDPCTNCSSAGVIC. The segment at 589-608 is disordered; sequence AANTLSVPHTPPSRSSITSS.

Its subcellular location is the nucleus. Transcription factor that specifically regulates the neosartoricin B biosynthesis gene cluster. The chain is C6 finger domain transcription factor nscR from Trichophyton rubrum (strain ATCC MYA-4607 / CBS 118892) (Athlete's foot fungus).